Here is a 1326-residue protein sequence, read N- to C-terminus: Paired amphipathic helix protein Sin3-like 4 (1326 aa).

PAH domains lie at 8-78 (QKLT…LPKG), 95-165 (KPVE…LPDT), and 292-367 (IPSS…LAQC). Disordered stretches follow at residues 272 to 299 (DDDSAEMSDQAREGDKFSGAIPSSSTYD), 715 to 812 (VPSR…RAET), 844 to 864 (SVAGLSNSNPKPALTSGTEEL), and 927 to 1000 (SKSK…EGDM). The segment covering 721-737 (GAEDREDAVKSTNHDRE) has biased composition (basic and acidic residues). 4 stretches are compositionally biased toward polar residues: residues 744–757 (SPQNGASIANSMRS), 781–805 (SSKTSDALLSCDNTQNDKMPKNLTT), 844–861 (SVAGLSNSNPKPALTSGT), and 942–961 (PRSSDGSGNTSHNGDVSGTD). Residues 967–981 (DCYREDDIDHNKVES) show a composition bias toward basic and acidic residues.

It localises to the nucleus. In terms of biological role, acts as a transcriptional repressor. Plays roles in regulating gene expression and genome stability. The polypeptide is Paired amphipathic helix protein Sin3-like 4 (SNL4) (Arabidopsis thaliana (Mouse-ear cress)).